The primary structure comprises 158 residues: Transcription elongation factor GreA (158 aa).

Belongs to the GreA/GreB family.

Necessary for efficient RNA polymerase transcription elongation past template-encoded arresting sites. The arresting sites in DNA have the property of trapping a certain fraction of elongating RNA polymerases that pass through, resulting in locked ternary complexes. Cleavage of the nascent transcript by cleavage factors such as GreA or GreB allows the resumption of elongation from the new 3'terminus. GreA releases sequences of 2 to 3 nucleotides. The protein is Transcription elongation factor GreA of Sinorhizobium medicae (strain WSM419) (Ensifer medicae).